Consider the following 311-residue polypeptide: 2-methoxy-6-polyprenyl-1,4-benzoquinol methylase, mitochondrial (311 aa).

Residues 1–29 (MAAGLCPGRALLSRRGGALWALLGTARGR) constitute a mitochondrion transit peptide. S-adenosyl-L-methionine contacts are provided by residues T100, D155, and 183–184 (NA).

The protein belongs to the class I-like SAM-binding methyltransferase superfamily. MenG/UbiE family. As to quaternary structure, component of a multi-subunit COQ enzyme complex, composed of at least COQ3, COQ4, COQ5, COQ6, COQ7 and COQ9.

The protein localises to the mitochondrion inner membrane. The catalysed reaction is a 2-methoxy-6-(all-trans-polyprenyl)benzene-1,4-diol + S-adenosyl-L-methionine = a 5-methoxy-2-methyl-3-(all-trans-polyprenyl)benzene-1,4-diol + S-adenosyl-L-homocysteine + H(+). Its pathway is cofactor biosynthesis; ubiquinone biosynthesis. Methyltransferase required for the conversion of 2-polyprenyl-6-methoxy-1,4-benzoquinol (DDMQH2) to 2-polyprenyl-3-methyl-6-methoxy-1,4-benzoquinol (DMQH2). This chain is 2-methoxy-6-polyprenyl-1,4-benzoquinol methylase, mitochondrial, found in Gallus gallus (Chicken).